The following is a 415-amino-acid chain: Casein kinase I isoform delta (415 aa).

Residues Tyr-9–Phe-277 form the Protein kinase domain. ATP is bound by residues Ile-15–Ile-23 and Lys-38. Asp-128 functions as the Proton acceptor in the catalytic mechanism. The interval His-278–Glu-364 is centrosomal localization signal (CLS). Over residues Ala-301–Leu-315 the composition is skewed to basic and acidic residues. Residues Ala-301–Arg-415 are disordered. The autoinhibitory stretch occupies residues His-317 to Pro-342. Phosphoserine occurs at positions 328 and 331. A compositionally biased stretch (polar residues) spans Thr-347–Arg-358. Ser-370 carries the post-translational modification Phosphoserine. Omega-N-methylarginine is present on Arg-375. Positions Asn-380–Ile-400 are enriched in polar residues. Phosphoserine is present on residues Ser-382, Ser-383, Ser-384, Ser-407, and Ser-411.

This sequence belongs to the protein kinase superfamily. CK1 Ser/Thr protein kinase family. Casein kinase I subfamily. Monomer. Component of the circadian core oscillator, which includes the CRY proteins, CLOCK, or NPAS2, ARTNL/BMAL1 or ARTNL2/BMAL2, CSNK1D and/or CSNK1E, TIMELESS and the PER proteins. Interacts with DNMT1 and MAP1A. Interacts directly with PER1 and PER2 which may lead to their degradation. Interacts with MAPT/TAU, SNAPIN, DBNDD2, AIB1/NCOA3 and ESR1. Interacts with AKAP9/AKAP450; this interaction promotes centrosomal subcellular location. Binds to tubulins in mitotic cells upon DNA damage. Interacts with GJA1. Interacts with DDX3X; this interaction enhances CSNK1D kinase activity in vitro, but it is unclear whether this interaction is physiologically relevant. Interacts with FAM83A, FAM83B, FAM83E and FAM83H (via DUF1669). In terms of processing, autophosphorylated on serine and threonine residues; this autophosphorylation represses activity. Reactivated by phosphatase-mediated dephosphorylation. May be dephosphorylated by PP1.

The protein resides in the cytoplasm. It localises to the nucleus. It is found in the cytoskeleton. Its subcellular location is the microtubule organizing center. The protein localises to the centrosome. The protein resides in the perinuclear region. It localises to the cell membrane. It is found in the spindle. Its subcellular location is the golgi apparatus. It catalyses the reaction L-seryl-[protein] + ATP = O-phospho-L-seryl-[protein] + ADP + H(+). It carries out the reaction L-threonyl-[protein] + ATP = O-phospho-L-threonyl-[protein] + ADP + H(+). The catalysed reaction is L-seryl-[tau protein] + ATP = O-phospho-L-seryl-[tau protein] + ADP + H(+). The enzyme catalyses L-threonyl-[tau protein] + ATP = O-phospho-L-threonyl-[tau protein] + ADP + H(+). Its activity is regulated as follows. Exhibits substrate-dependent heparin activation. Drug-mediated inhibition leads to a delay of the oscillations with the magnitude of this effect dependent upon the timing of drug administration. Inhibited by phosphorylation. Essential serine/threonine-protein kinase that regulates diverse cellular growth and survival processes including Wnt signaling, DNA repair and circadian rhythms. It can phosphorylate a large number of proteins. Casein kinases are operationally defined by their preferential utilization of acidic proteins such as caseins as substrates. Phosphorylates connexin-43/GJA1, MAP1A, SNAPIN, MAPT/TAU, TOP2A, DCK, HIF1A, EIF6, p53/TP53, DVL2, DVL3, ESR1, AIB1/NCOA3, DNMT1, PKD2, YAP1, PER1 and PER2. Central component of the circadian clock. In balance with PP1, determines the circadian period length through the regulation of the speed and rhythmicity of PER1 and PER2 phosphorylation. Controls PER1 and PER2 nuclear transport and degradation. YAP1 phosphorylation promotes its SCF(beta-TRCP) E3 ubiquitin ligase-mediated ubiquitination and subsequent degradation. DNMT1 phosphorylation reduces its DNA-binding activity. Phosphorylation of ESR1 and AIB1/NCOA3 stimulates their activity and coactivation. Phosphorylation of DVL2 and DVL3 regulates WNT3A signaling pathway that controls neurite outgrowth. Phosphorylates NEDD9/HEF1. EIF6 phosphorylation promotes its nuclear export. Triggers down-regulation of dopamine receptors in the forebrain. Activates DCK in vitro by phosphorylation. TOP2A phosphorylation favors DNA cleavable complex formation. May regulate the formation of the mitotic spindle apparatus in extravillous trophoblast. Modulates connexin-43/GJA1 gap junction assembly by phosphorylation. Probably involved in lymphocyte physiology. Regulates fast synaptic transmission mediated by glutamate. This chain is Casein kinase I isoform delta (CSNK1D), found in Pongo abelii (Sumatran orangutan).